The chain runs to 496 residues: Palmitoleoyl-protein carboxylesterase NOTUM (496 aa).

Positions 1 to 19 (MGRGVRVLLLLSLLHCAGG) are cleaved as a signal peptide. The tract at residues 21 to 46 (EGRKTWRRRGQQPPPPPRTEAAPAAG) is disordered. Phosphoserine; by FAM20C is present on Ser81. An N-linked (GlcNAc...) asparagine glycan is attached at Asn96. Active-site charge relay system residues include Ser232, Asp340, and His389.

This sequence belongs to the pectinacetylesterase family. Notum subfamily. In terms of tissue distribution, rarely expressed in adult normal tissues.

The protein resides in the secreted. The catalysed reaction is [Wnt protein]-O-(9Z)-hexadecenoyl-L-serine + H2O = [Wnt protein]-L-serine + (9Z)-hexadecenoate + H(+). Functionally, carboxylesterase that acts as a key negative regulator of the Wnt signaling pathway by specifically mediating depalmitoleoylation of WNT proteins. Serine palmitoleoylation of WNT proteins is required for efficient binding to frizzled receptors. The protein is Palmitoleoyl-protein carboxylesterase NOTUM of Homo sapiens (Human).